A 30-amino-acid chain; its full sequence is Diuretic hormone 2 (30 aa).

A Valine amide modification is found at valine 30.

Belongs to the sauvagine/corticotropin-releasing factor/urotensin I family.

It localises to the secreted. Functionally, regulation of fluid secretion. This is Diuretic hormone 2 from Manduca sexta (Tobacco hawkmoth).